Consider the following 409-residue polypeptide: MIPGNRMLMVVLLCQVLLGGASHASLIPETGKKKVAEIQGHAGGRRSGQSHELLRDFEATLLQMFGLRRRPQPSKSAVIPDYMRDLYRLQSGEEEEEEQIQGIGLEYPERPASRANTVRSFHHEEHLENIPGTSENSAFRFLFNLSSIPENEVISSAELRLFREQVDQGPDWDQGFHRINIYEVMKPPAEVVPGHLITRLLDTRLVHHNVTRWETFDVSPAVLRWTREKQPNYGLAIEVTHLHQTRTHQGQHVRISRSLPQGSGDWAQLRPLLVTFGHDGRGHALTRRRRAKRSPKHHPQRARKKNKNCRRHSLYVDFSDVGWNDWIVAPPGYQAFYCHGDCPFPLADHLNSTNHAIVQTLVNSVNSSIPKACCVPTELSAISMLYLDEYDKVVLKNYQEMVVEGCGCR.

Positions 1–24 (MIPGNRMLMVVLLCQVLLGGASHA) are cleaved as a signal peptide. Positions 25–293 (SLIPETGKKK…ALTRRRRAKR (269 aa)) are excised as a propeptide. S91 carries the phosphoserine modification. N-linked (GlcNAc...) asparagine glycans are attached at residues N144 and N209. Residues 284 to 308 (ALTRRRRAKRSPKHHPQRARKKNKN) form a disordered region. 3 disulfide bridges follow: C309–C374, C338–C406, and C342–C408. 2 N-linked (GlcNAc...) asparagine glycosylation sites follow: N351 and N366.

It belongs to the TGF-beta family. As to quaternary structure, homodimer; disulfide-linked. Interacts with GREM2. Part of a complex consisting of TWSG1 and CHRD. Interacts with the serine proteases, HTRA1 and HTRA3; the interaction with either inhibits BMP4-mediated signaling. The HTRA protease activity is required for this inhibition. Interacts with SOSTDC1. Interacts with FBN1 (via N-terminal domain) and FBN2. Interacts with type I receptor BMPR1A. Interacts with type II receptor BMPR2. Interacts with FSTL1; this interaction inhibits the activation of the BMP4/Smad1/5/8 signaling pathway. Interacts with SCUBE3. Interacts with TGFBR3.

It is found in the secreted. Its subcellular location is the extracellular space. The protein resides in the extracellular matrix. Growth factor of the TGF-beta superfamily that plays essential roles in many developmental processes, including neurogenesis, vascular development, angiogenesis and osteogenesis. Acts in concert with PTHLH/PTHRP to stimulate ductal outgrowth during embryonic mammary development and to inhibit hair follicle induction. Initiates the canonical BMP signaling cascade by associating with type I receptor BMPR1A and type II receptor BMPR2. Once all three components are bound together in a complex at the cell surface, BMPR2 phosphorylates and activates BMPR1A. In turn, BMPR1A propagates signal by phosphorylating SMAD1/5/8 that travel to the nucleus and act as activators and repressors of transcription of target genes. Positively regulates the expression of odontogenic development regulator MSX1 via inducing the IPO7-mediated import of SMAD1 to the nucleus. Required for MSX1-mediated mesenchymal molar tooth bud development beyond the bud stage, via promoting Wnt signaling. Acts as a positive regulator of odontoblast differentiation during mesenchymal tooth germ formation, expression is repressed during the bell stage by MSX1-mediated inhibition of CTNNB1 signaling. Able to induce its own expression in dental mesenchymal cells and also in the neighboring dental epithelial cells via an MSX1-mediated pathway. Can also signal through non-canonical BMP pathways such as ERK/MAP kinase, PI3K/Akt, or SRC cascades. For example, induces SRC phosphorylation which, in turn, activates VEGFR2, leading to an angiogenic response. This is Bone morphogenetic protein 4 from Bos taurus (Bovine).